A 575-amino-acid chain; its full sequence is Arginine--tRNA ligase (575 aa).

A 'HIGH' region motif is present at residues 131 to 141 (ANPNGPLHIGH).

It belongs to the class-I aminoacyl-tRNA synthetase family.

Its subcellular location is the cytoplasm. It carries out the reaction tRNA(Arg) + L-arginine + ATP = L-arginyl-tRNA(Arg) + AMP + diphosphate. The chain is Arginine--tRNA ligase from Methanobrevibacter smithii (strain ATCC 35061 / DSM 861 / OCM 144 / PS).